A 584-amino-acid polypeptide reads, in one-letter code: Beta-fructofuranosidase, insoluble isoenzyme CWINV1 (584 aa).

A signal peptide spans 1–28; that stretch reads MTKEVCSNIGLWLLLTLLIGNYVVNLEA. Residues 63-66, Gln82, Trp90, and 125-126 each bind substrate; these read WMND and WS. Residue Asp66 is part of the active site. 2 N-linked (GlcNAc...) asparagine glycosylation sites follow: Asn159 and Asn186. Residues 191–192, Glu246, and Asp282 contribute to the substrate site; that span reads RD. N-linked (GlcNAc...) asparagine glycans are attached at residues Asn342 and Asn446. Cys442 and Cys491 are oxidised to a cystine.

It belongs to the glycosyl hydrolase 32 family. Expressed in seedlings, leaves, flowers, and seeds.

It localises to the secreted. The protein localises to the extracellular space. The protein resides in the apoplast. It is found in the cell wall. It catalyses the reaction Hydrolysis of terminal non-reducing beta-D-fructofuranoside residues in beta-D-fructofuranosides.. In terms of biological role, beta-fructofuranosidase that can use sucrose and 1-kestose, and, to a lower extent, neokestose and levan, as substrates, but not inuline. This is Beta-fructofuranosidase, insoluble isoenzyme CWINV1 (CWINV1) from Arabidopsis thaliana (Mouse-ear cress).